A 45-amino-acid polypeptide reads, in one-letter code: uncharacterized protein (45 aa).

This is an uncharacterized protein from Acidianus two-tailed virus (ATV).